The chain runs to 304 residues: ATP phosphoribosyltransferase (304 aa).

Belongs to the ATP phosphoribosyltransferase family.

It is found in the cytoplasm. The catalysed reaction is 1-(5-phospho-beta-D-ribosyl)-ATP + diphosphate = 5-phospho-alpha-D-ribose 1-diphosphate + ATP. It participates in amino-acid biosynthesis; L-histidine biosynthesis; L-histidine from 5-phospho-alpha-D-ribose 1-diphosphate: step 1/9. Functionally, catalyzes the condensation of ATP and 5-phosphoribose 1-diphosphate to form N'-(5'-phosphoribosyl)-ATP (PR-ATP). Has a crucial role in the pathway because the rate of histidine biosynthesis seems to be controlled primarily by regulation of the enzymatic activity. The sequence is that of ATP phosphoribosyltransferase (HIS1) from Debaryomyces hansenii (strain ATCC 36239 / CBS 767 / BCRC 21394 / JCM 1990 / NBRC 0083 / IGC 2968) (Yeast).